The primary structure comprises 267 residues: DCN1-like protein 2 (267 aa).

Residues 1–48 are disordered; the sequence is MTRKYTKKSSGSTASTTNSTAEIVDLTTSTSSVGKKRKSPDEKAQPIT. The span at 8–21 shows a compositional bias: low complexity; it reads KSSGSTASTTNSTA. One can recognise a DCUN1 domain in the interval 75–262; that stretch reads HYTYLYTYIF…LLDQFSEWVQ (188 aa).

The protein is DCN1-like protein 2 of Dictyostelium discoideum (Social amoeba).